A 358-amino-acid chain; its full sequence is Alanine racemase (358 aa).

Lys-35 acts as the Proton acceptor; specific for D-alanine in catalysis. Lys-35 carries the N6-(pyridoxal phosphate)lysine modification. Arg-130 provides a ligand contact to substrate. Catalysis depends on Tyr-255, which acts as the Proton acceptor; specific for L-alanine. Residue Met-303 coordinates substrate.

Belongs to the alanine racemase family. Pyridoxal 5'-phosphate serves as cofactor.

The catalysed reaction is L-alanine = D-alanine. It participates in amino-acid biosynthesis; D-alanine biosynthesis; D-alanine from L-alanine: step 1/1. Catalyzes the interconversion of L-alanine and D-alanine. May also act on other amino acids. The protein is Alanine racemase (alr) of Shewanella baltica (strain OS223).